A 198-amino-acid polypeptide reads, in one-letter code: Holliday junction resolvase RecU (198 aa).

The tract at residues 1–29 (MIRYPNGKSYQPKTAASSLQKKPSYSNRG) is disordered. A compositionally biased stretch (polar residues) spans 8–29 (KSYQPKTAASSLQKKPSYSNRG). Residues T83, D85, E98, and Q117 each coordinate Mg(2+).

It belongs to the RecU family. It depends on Mg(2+) as a cofactor.

The protein localises to the cytoplasm. It carries out the reaction Endonucleolytic cleavage at a junction such as a reciprocal single-stranded crossover between two homologous DNA duplexes (Holliday junction).. Endonuclease that resolves Holliday junction intermediates in genetic recombination. Cleaves mobile four-strand junctions by introducing symmetrical nicks in paired strands. Promotes annealing of linear ssDNA with homologous dsDNA. Required for DNA repair, homologous recombination and chromosome segregation. This Bacillus licheniformis (strain ATCC 14580 / DSM 13 / JCM 2505 / CCUG 7422 / NBRC 12200 / NCIMB 9375 / NCTC 10341 / NRRL NRS-1264 / Gibson 46) protein is Holliday junction resolvase RecU.